We begin with the raw amino-acid sequence, 158 residues long: Glycine/sarcosine/betaine reductase complex component A1 (158 aa).

Sec-46 is an active-site residue. A non-standard amino acid (selenocysteine) is located at residue Sec-46.

This sequence belongs to the GrdA family. As to quaternary structure, monomer. Component of the glycine, sarcosine and betaine reductase complexes, together with components B and C.

The enzyme catalyses acetyl phosphate + [thioredoxin]-disulfide + NH4(+) + H2O = [thioredoxin]-dithiol + glycine + phosphate + H(+). It carries out the reaction acetyl phosphate + methylamine + [thioredoxin]-disulfide + H2O = sarcosine + [thioredoxin]-dithiol + phosphate + H(+). The catalysed reaction is acetyl phosphate + trimethylamine + [thioredoxin]-disulfide + H2O = glycine betaine + [thioredoxin]-dithiol + phosphate + H(+). In the first step of glycine, betaine and sarcosine reductases, the substrate is bound to component PB via a Schiff base intermediate. Then the PB-activated substrate is nucleophilically attacked by the selenol anion of component PA to transform it to a carboxymethylated selenoether and the respective amine. By action of component PC, acetyl phosphate is formed, leaving component PA in its oxidized state. Finally component PA becomes reduced by the thioredoxin system to start a new catalytic cycle of reductive deamination. This is Glycine/sarcosine/betaine reductase complex component A1 (grdA1) from Photobacterium profundum (strain SS9).